Here is a 274-residue protein sequence, read N- to C-terminus: Diaminopimelate epimerase (274 aa).

Substrate-binding residues include N11, Q44, and N64. The active-site Proton donor is the C73. Substrate is bound by residues 74–75 (GN), N157, N190, and 208–209 (ER). Residue C217 is the Proton acceptor of the active site. Residue 218 to 219 (GS) participates in substrate binding.

Belongs to the diaminopimelate epimerase family. As to quaternary structure, homodimer.

Its subcellular location is the cytoplasm. It catalyses the reaction (2S,6S)-2,6-diaminopimelate = meso-2,6-diaminopimelate. It participates in amino-acid biosynthesis; L-lysine biosynthesis via DAP pathway; DL-2,6-diaminopimelate from LL-2,6-diaminopimelate: step 1/1. In terms of biological role, catalyzes the stereoinversion of LL-2,6-diaminopimelate (L,L-DAP) to meso-diaminopimelate (meso-DAP), a precursor of L-lysine and an essential component of the bacterial peptidoglycan. This Histophilus somni (strain 129Pt) (Haemophilus somnus) protein is Diaminopimelate epimerase.